We begin with the raw amino-acid sequence, 509 residues long: DAP3-binding cell death enhancer 1 (509 aa).

The N-terminal 23 residues, 1-23 (MWRLTGILGRALPRLLGPGFRGI), are a transit peptide targeting the mitochondrion. Disordered stretches follow at residues 19-60 (GFRG…RNRD) and 143-185 (VLPS…PGLL). Positions 24 to 101 (TPKPTSSDGP…AVLALHLARQ (78 aa)) are cleaved as a propeptide — extended MTS. Residues 26 to 40 (KPTSSDGPQTTSTTL) show a composition bias toward polar residues. Composition is skewed to basic and acidic residues over residues 46 to 60 (NFDR…RNRD) and 156 to 168 (GLRE…EEPA). TPR repeat units follow at residues 213-245 (AGPP…QLSV), 246-278 (AIAF…RGYS), 279-313 (KAQY…VQGH), 314-351 (SLAQ…DSGL), 352-385 (TEAQ…SNGD), 386-423 (SQSR…GNEP), and 470-498 (ASST…AMPS). An SIFI-degron motif is present at residues 307–326 (LAAVQGHSLAQYRYARCLLQ).

Belongs to the DELE1 family. Interacts with DAP3. In terms of assembly, interacts (via TPR repeats) with EIF2AK1/HRI; activating the protein kinase activity of EIF2AK1/HRI, thereby promoting the integrated stress response (ISR). As to quaternary structure, homooctamer; oligomerization is required to activate EIF2AK1/HRI. Interacts (via TPR repeats) with EIF2AK1/HRI; activating the protein kinase activity of EIF2AK1/HRI, thereby promoting the integrated stress response (ISR). In terms of processing, unstable protein in absence of stress: imported in the mitochondrial matrix following processing by the mitochondrial-processing peptidase (MPP), where it is degraded by LONP1. Stabilized in response to iron deficiency: iron deficiency impairs mitochondrial import, promoting localization at the mitochondrial surface and stabilization. Cleaved by OMA1 in response to mitochondrial stress, generating the DAP3-binding cell death enhancer 1 short form (DELE1(S) or S-DELE1) that accumulates in the cytosol and activates the protein kinase activity of EIF2AK1/HRI. Protein cleavage by OMA1 can take place at different positions, and apparently does not require a specific sequence motif. Ubiquitinated and degraded by the SIFI complex once the mitochondrial stress has been resolved, thereby providing stress response silencing. Within the SIFI complex, UBR4 initiates ubiquitin chain that are further elongated or branched by KCMF1.

It is found in the mitochondrion. It localises to the mitochondrion outer membrane. Its subcellular location is the mitochondrion inner membrane. The protein localises to the cytoplasm. The protein resides in the cytosol. Its function is as follows. Protein kinase activator that acts as a key activator of the integrated stress response (ISR) following various stresses, such as iron deficiency, mitochondrial stress or mitochondrial DNA breaks. Detects impaired protein import and processing in mitochondria, activating the ISR. May also required for the induction of death receptor-mediated apoptosis through the regulation of caspase activation. Protein kinase activator that activates the ISR in response to iron deficiency: iron deficiency impairs mitochondrial import, promoting DELE1 localization at the mitochondrial surface, where it binds and activates EIF2AK1/HRI to trigger the ISR. Functionally, protein kinase activator generated by protein cleavage in response to mitochondrial stress, which accumulates in the cytosol and specifically binds to and activates the protein kinase activity of EIF2AK1/HRI. It thereby activates the integrated stress response (ISR): EIF2AK1/HRI activation promotes eIF-2-alpha (EIF2S1) phosphorylation, leading to a decrease in global protein synthesis and the induction of selected genes, including the transcription factor ATF4, the master transcriptional regulator of the ISR. Also acts as an activator of PRKN-independent mitophagy: activates the protein kinase activity of EIF2AK1/HRI in response to mitochondrial damage, promoting eIF-2-alpha (EIF2S1) phosphorylation, leading to mitochondrial localization of EIF2S1 followed by induction of mitophagy. The sequence is that of DAP3-binding cell death enhancer 1 from Rattus norvegicus (Rat).